Here is a 324-residue protein sequence, read N- to C-terminus: Biotin synthase (324 aa).

Positions 42–269 constitute a Radical SAM core domain; the sequence is NEVQISSLLN…KSYIRLAAGR (228 aa). The [4Fe-4S] cluster site is built by Cys57, Cys61, and Cys64. Residues Cys101, Cys132, Cys192, and Arg264 each contribute to the [2Fe-2S] cluster site.

This sequence belongs to the radical SAM superfamily. Biotin synthase family. Homodimer. Requires [4Fe-4S] cluster as cofactor. The cofactor is [2Fe-2S] cluster.

The catalysed reaction is (4R,5S)-dethiobiotin + (sulfur carrier)-SH + 2 reduced [2Fe-2S]-[ferredoxin] + 2 S-adenosyl-L-methionine = (sulfur carrier)-H + biotin + 2 5'-deoxyadenosine + 2 L-methionine + 2 oxidized [2Fe-2S]-[ferredoxin]. It functions in the pathway cofactor biosynthesis; biotin biosynthesis; biotin from 7,8-diaminononanoate: step 2/2. In terms of biological role, catalyzes the conversion of dethiobiotin (DTB) to biotin by the insertion of a sulfur atom into dethiobiotin via a radical-based mechanism. The sequence is that of Biotin synthase from Ehrlichia canis (strain Jake).